Here is a 456-residue protein sequence, read N- to C-terminus: Phosphomethylpyrimidine synthase (456 aa).

Substrate-binding positions include Asn80, Met109, Tyr139, His175, 195–197, 236–239, and Glu275; these read SRG and DSLR. His279 contributes to the Zn(2+) binding site. Tyr302 lines the substrate pocket. His343 is a binding site for Zn(2+). Positions 423, 426, and 431 each coordinate [4Fe-4S] cluster.

It belongs to the ThiC family. The cofactor is [4Fe-4S] cluster.

The catalysed reaction is 5-amino-1-(5-phospho-beta-D-ribosyl)imidazole + S-adenosyl-L-methionine = 4-amino-2-methyl-5-(phosphooxymethyl)pyrimidine + CO + 5'-deoxyadenosine + formate + L-methionine + 3 H(+). It functions in the pathway cofactor biosynthesis; thiamine diphosphate biosynthesis. Catalyzes the synthesis of the hydroxymethylpyrimidine phosphate (HMP-P) moiety of thiamine from aminoimidazole ribotide (AIR) in a radical S-adenosyl-L-methionine (SAM)-dependent reaction. The protein is Phosphomethylpyrimidine synthase of Prochlorococcus marinus (strain AS9601).